The chain runs to 336 residues: Ribosomal RNA large subunit methyltransferase F (336 aa).

The protein belongs to the methyltransferase superfamily. METTL16/RlmF family.

Its subcellular location is the cytoplasm. The enzyme catalyses adenosine(1618) in 23S rRNA + S-adenosyl-L-methionine = N(6)-methyladenosine(1618) in 23S rRNA + S-adenosyl-L-homocysteine + H(+). Specifically methylates the adenine in position 1618 of 23S rRNA. This is Ribosomal RNA large subunit methyltransferase F from Serratia proteamaculans (strain 568).